The primary structure comprises 144 residues: Large ribosomal subunit protein uL15 (144 aa).

Residues 1–49 (MRLNTLSPAAGSKSAPKRVGRGIGSGLGKTAGRGHKGQKSRSGGGVRVG) form a disordered region. The span at 21–31 (RGIGSGLGKTA) shows a compositional bias: gly residues.

Belongs to the universal ribosomal protein uL15 family. Part of the 50S ribosomal subunit.

Its function is as follows. Binds to the 23S rRNA. The chain is Large ribosomal subunit protein uL15 from Shewanella frigidimarina (strain NCIMB 400).